The chain runs to 181 residues: Peptidyl-tRNA hydrolase (181 aa).

Y14 contributes to the tRNA binding site. H19 functions as the Proton acceptor in the catalytic mechanism. TRNA is bound by residues Y60, N62, and N108.

The protein belongs to the PTH family. In terms of assembly, monomer.

The protein localises to the cytoplasm. The catalysed reaction is an N-acyl-L-alpha-aminoacyl-tRNA + H2O = an N-acyl-L-amino acid + a tRNA + H(+). Hydrolyzes ribosome-free peptidyl-tRNAs (with 1 or more amino acids incorporated), which drop off the ribosome during protein synthesis, or as a result of ribosome stalling. Its function is as follows. Catalyzes the release of premature peptidyl moieties from peptidyl-tRNA molecules trapped in stalled 50S ribosomal subunits, and thus maintains levels of free tRNAs and 50S ribosomes. The protein is Peptidyl-tRNA hydrolase of Metamycoplasma arthritidis (strain 158L3-1) (Mycoplasma arthritidis).